The chain runs to 418 residues: Dual-specificity RNA methyltransferase RlmN (418 aa).

The interval 1 to 21 is disordered; the sequence is MADTSLMPIPGQVDPVPAPRD. The active-site Proton acceptor is the glutamate 122. Residues 128–383 form the Radical SAM core domain; sequence DADRGTLCVS…APVRTPRGRD (256 aa). Cysteine 135 and cysteine 388 form a disulfide bridge. Residues cysteine 142, cysteine 146, and cysteine 149 each contribute to the [4Fe-4S] cluster site. Residues 212–213, serine 244, 266–268, and asparagine 345 each bind S-adenosyl-L-methionine; these read GE and SLH. The S-methylcysteine intermediate role is filled by cysteine 388. Residues 393-418 are disordered; the sequence is TAAQKKSRAERDREAAAEAEAAASQA. Positions 399–408 are enriched in basic and acidic residues; the sequence is SRAERDREAA.

It belongs to the radical SAM superfamily. RlmN family. Requires [4Fe-4S] cluster as cofactor.

Its subcellular location is the cytoplasm. It carries out the reaction adenosine(2503) in 23S rRNA + 2 reduced [2Fe-2S]-[ferredoxin] + 2 S-adenosyl-L-methionine = 2-methyladenosine(2503) in 23S rRNA + 5'-deoxyadenosine + L-methionine + 2 oxidized [2Fe-2S]-[ferredoxin] + S-adenosyl-L-homocysteine. It catalyses the reaction adenosine(37) in tRNA + 2 reduced [2Fe-2S]-[ferredoxin] + 2 S-adenosyl-L-methionine = 2-methyladenosine(37) in tRNA + 5'-deoxyadenosine + L-methionine + 2 oxidized [2Fe-2S]-[ferredoxin] + S-adenosyl-L-homocysteine. Functionally, specifically methylates position 2 of adenine 2503 in 23S rRNA and position 2 of adenine 37 in tRNAs. m2A2503 modification seems to play a crucial role in the proofreading step occurring at the peptidyl transferase center and thus would serve to optimize ribosomal fidelity. This Erythrobacter litoralis (strain HTCC2594) protein is Dual-specificity RNA methyltransferase RlmN.